The following is a 620-amino-acid chain: Apoptosis regulator MC163R (620 aa).

The helical transmembrane segment at 113 to 133 threads the bilayer; the sequence is APLPLLLLPLLLPPMILLFFL.

Its subcellular location is the host mitochondrion. The protein localises to the host membrane. Plays a role in the inhibition of host apoptosis. Prevents host TNF-alpha-induced mitochondrial membrane permeabilization and reduces caspase-3/CASP3 and PARP1 cleavage induced by the intrinsic apoptotic pathway. This chain is Apoptosis regulator MC163R (MC163R), found in Homo sapiens (Human).